A 515-amino-acid chain; its full sequence is MDEFHRYGKEDSSWQQCFLYPLFFQEDLYAISHDHYLDGSSSSEPMEHFSFNDQLSFLTVKRLIGRIREQNHSIGLFVNCDPNPLVDRNKSSYFESVLEGLTLVLEVPFSTRSKYSVQGIKEWKSFRSIHSIFPFLEEKFPHSNYILDTRIPYSIHPEFLVRTFRRWIQDAPSLHPLRSVLYEYRNSPENLQRSIIVAPRVNTRFFLFLWNHYVYECESILVPLLKRSFQSRSSSHGSFPERTLFDRKIKHIIRISHRNSLKSIWSLKDPKIHYVRYGERFIIAIKGTHLLVKKCRYYLPIFRQCYFHLWSEPYRVCSHQLSKNCSSFPGYSLRVRMKPLLVRTKMLGELFITDLITDEFYPIVPIVSIIGLLAREKFCDISGRPISKLAWTSLTDDDILDRFDRIWRNFFHYYSGSFGRDGLYRIKYILSLSCAKTLACKHKSTIRVVRKELGPELFKKSFSKEREFDSPAFSSKAVARSQRERIWHSDIPQINPLANSWQKIQDLKIKNLFDQ.

The protein belongs to the intron maturase 2 family. MatK subfamily.

The protein resides in the plastid. It localises to the chloroplast. Functionally, usually encoded in the trnK tRNA gene intron. Probably assists in splicing its own and other chloroplast group II introns. The protein is Maturase K of Cedrus deodara (Deodar cedar).